The following is a 109-amino-acid chain: Small ribosomal subunit protein uS10 (109 aa).

The protein belongs to the universal ribosomal protein uS10 family. As to quaternary structure, part of the 30S ribosomal subunit.

Functionally, involved in the binding of tRNA to the ribosomes. The protein is Small ribosomal subunit protein uS10 of Wolbachia pipientis wMel.